Reading from the N-terminus, the 150-residue chain is Large ribosomal subunit protein bL9 (150 aa).

This sequence belongs to the bacterial ribosomal protein bL9 family.

In terms of biological role, binds to the 23S rRNA. The sequence is that of Large ribosomal subunit protein bL9 from Desulforudis audaxviator (strain MP104C).